The primary structure comprises 386 residues: Succinate--CoA ligase [ADP-forming] subunit beta (386 aa).

Positions 9 to 244 (KELLRKYGVV…FDEEDADEIE (236 aa)) constitute an ATP-grasp domain. ATP-binding positions include K46, 53-55 (GRG), E99, A102, and E107. Positions 199 and 213 each coordinate Mg(2+). Substrate-binding positions include N264 and 321–323 (GIM).

This sequence belongs to the succinate/malate CoA ligase beta subunit family. In terms of assembly, heterotetramer of two alpha and two beta subunits. The cofactor is Mg(2+).

It carries out the reaction succinate + ATP + CoA = succinyl-CoA + ADP + phosphate. It catalyses the reaction GTP + succinate + CoA = succinyl-CoA + GDP + phosphate. The protein operates within carbohydrate metabolism; tricarboxylic acid cycle; succinate from succinyl-CoA (ligase route): step 1/1. Functionally, succinyl-CoA synthetase functions in the citric acid cycle (TCA), coupling the hydrolysis of succinyl-CoA to the synthesis of either ATP or GTP and thus represents the only step of substrate-level phosphorylation in the TCA. The beta subunit provides nucleotide specificity of the enzyme and binds the substrate succinate, while the binding sites for coenzyme A and phosphate are found in the alpha subunit. The polypeptide is Succinate--CoA ligase [ADP-forming] subunit beta (Aromatoleum aromaticum (strain DSM 19018 / LMG 30748 / EbN1) (Azoarcus sp. (strain EbN1))).